The primary structure comprises 799 residues: MKVESRSHNVHHAHGEEEKVMTRKQKAESKAHEVEHSPKKAKVEDEKNGHTNGKSASDVVQEYDEFCKATNEQLSLEQMKEILEANDLDSSGSDLEITRRCQDLLFFGALEKCMVCNGNMEFDGRRYGCRGFYSEWSSCTFSTREPPRKDEPIKLPDSVQNSPVSDLLKKYQDPSKRPQRDLGLAIKPFTGMMISLMGRLNRTHLNFSGASCLVASPAERDRGGTSKLADAMERGIPVVREAWLTDSIEKQEPQPLESYDLVSDLSVDGKGIPWDKQDPGEEAIESLSAELKLYGKRGVYKDTKLHEQDGKIFEKDGILYNCAFSLCDQGRKLNDYCVMQLIVVPENSLHLYFKKGRVGDDPSAEERLEECENVDNAIKEFVRLFEEITGNEFESWEREKKFQKKPLKFYPIDMDDGVEVRHGALGLRQLGIAATHCKLEPMVANFMKVLCSQEIYKYALMEMGYDSPDLPIGMVTNLHLKRCEEILLEFIEKVKTLKETGPKADAIWSDFSQKWFTLMHSTRPFIFRDYQEIADHAAAALEGVRDITLASHLIGDMSGSTIDDPLSDTYKKLGCSITPLEKNSNDYEMIVKYLEKTYEPVKVGDIEYGVSVENIFTVESSACPSYADIVKMPNKVLLWCGSRSSNLLRHLHKGFLPAICSLPVPGYMFGKAIVCSDAAAEAARYGFTAVDRPEGFLVLAIASLGNEITELKSPPEDTTSLEEKKVGVKGLGKKKTDESEHFVWKDDIKVPCGSIIASEHEDSPLEYNEYAVYDPKQVRISYLVGVKYEEKDAVIDTAE.

Residues methionine 1 to glycine 49 are compositionally biased toward basic and acidic residues. The interval methionine 1–serine 55 is disordered. Residues lysine 39–proline 188 form the PADR1 zinc-binding domain. The SAP domain maps to asparagine 71–leucine 105. The interval glycine 108–proline 152 is zinc ribbon. Positions 113, 116, 129, and 139 each coordinate Zn(2+). The disordered stretch occupies residues threonine 140–asparagine 161. Basic and acidic residues predominate over residues glutamate 145–lysine 154. Residues phenylalanine 189–leucine 261 form the BRCT domain. Positions aspartate 309–phenylalanine 409 constitute a WGR domain. The PARP alpha-helical domain occupies histidine 436–glycine 555. Positions aspartate 564–isoleucine 795 constitute a PARP catalytic domain.

Belongs to the ARTD/PARP family.

The protein localises to the nucleus. It catalyses the reaction L-aspartyl-[protein] + NAD(+) = 4-O-(ADP-D-ribosyl)-L-aspartyl-[protein] + nicotinamide. It carries out the reaction L-glutamyl-[protein] + NAD(+) = 5-O-(ADP-D-ribosyl)-L-glutamyl-[protein] + nicotinamide. Functionally, involved in the base excision repair (BER) pathway, by catalyzing the poly(ADP-ribosyl)ation of a limited number of acceptor proteins involved in chromatin architecture and in DNA metabolism. This modification follows DNA damages and appears as an obligatory step in a detection/signaling pathway leading to the reparation of DNA strand breaks. The sequence is that of Protein ADP-ribosyltransferase PARP3 (PARP3) from Medicago truncatula (Barrel medic).